The chain runs to 166 residues: MSSDVSPPPLLSAEAAAQLATAPPVFTTDQILEILPHRYPFLLVDRVVEYQPGQRAVGLKNVTFNEPFFQGHFPNRPIMPGVLIVEAMAQLGGIVLTKLPDVAGRLALFAGIDGVRFRRPVLPGDQLLLSANLLTIRQKRIGKMFCRAQVGGQLVTEGELMFSLVD.

H72 is a catalytic residue.

This sequence belongs to the thioester dehydratase family. FabZ subfamily.

The protein localises to the cytoplasm. The enzyme catalyses a (3R)-hydroxyacyl-[ACP] = a (2E)-enoyl-[ACP] + H2O. Functionally, involved in unsaturated fatty acids biosynthesis. Catalyzes the dehydration of short chain beta-hydroxyacyl-ACPs and long chain saturated and unsaturated beta-hydroxyacyl-ACPs. The chain is 3-hydroxyacyl-[acyl-carrier-protein] dehydratase FabZ from Synechococcus sp. (strain JA-3-3Ab) (Cyanobacteria bacterium Yellowstone A-Prime).